We begin with the raw amino-acid sequence, 223 residues long: Glutathione-specific gamma-glutamylcyclotransferase 1 (223 aa).

Residues 1–26 are disordered; sequence MKQESASQSTPPPSLSPAPSSAQPSW. 36-41 contacts substrate; it reads IFGYGS. Glu-116 functions as the Proton acceptor in the catalytic mechanism.

Belongs to the gamma-glutamylcyclotransferase family. ChaC subfamily. In terms of assembly, interacts with NOTCH1 (via extracellular region). In terms of tissue distribution, widely expressed, with high expression in forebrain and anterior spinal cord. Expressed at intermediate level in the dorsal aorta and heart. Present throughout adult brain (at protein level).

It localises to the cytoplasm. It is found in the cytosol. The protein localises to the golgi apparatus. The protein resides in the trans-Golgi network. The enzyme catalyses glutathione = L-cysteinylglycine + 5-oxo-L-proline. In terms of biological role, catalyzes the cleavage of glutathione into 5-oxo-L-proline and a Cys-Gly dipeptide. Acts specifically on glutathione, but not on other gamma-glutamyl peptides. Glutathione depletion is an important factor for apoptosis initiation and execution. Acts as a pro-apoptotic component of the unfolded protein response pathway by mediating the pro-apoptotic effects of the ATF4-ATF3-DDIT3/CHOP cascade. Negative regulator of Notch signaling pathway involved in embryonic neurogenesis: acts by inhibiting Notch cleavage by furin, maintaining Notch in an immature inactive form, thereby promoting neurogenesis in embryos. The chain is Glutathione-specific gamma-glutamylcyclotransferase 1 from Mus musculus (Mouse).